A 452-amino-acid polypeptide reads, in one-letter code: C4-dicarboxylate transport protein 1 (452 aa).

The next 9 helical transmembrane spans lie at 18 to 38 (FQVVCAVIAGVALGYFYPSVG), 51 to 71 (LIKMMIAPIIFCTVVVGIAGM), 83 to 103 (LALLYFEVVSTFALIIGLLLV), 151 to 171 (AFAKGEILQVLLLAILFGFAL), 191 to 211 (VLFTIVGFIMKVAPIGAFGAM), 229 to 249 (LMGAFYLTCLIFIFGVLGAIA), 304 to 324 (GYSFNLDGTSIYLTMAAVFIA), 337 to 357 (ITLLGVLLLTSKGAAGVTGSG), and 359 to 379 (IVLAATLSAVGTVPVAGLALI). Residues 426–452 (WEEAQEPERVLDKKTEHMPVSAMSDAG) are disordered. A compositionally biased stretch (basic and acidic residues) spans 431–442 (EPERVLDKKTEH).

The protein belongs to the dicarboxylate/amino acid:cation symporter (DAACS) (TC 2.A.23) family.

It localises to the cell inner membrane. Responsible for the transport of dicarboxylates such as succinate, fumarate, and malate from the periplasm across the membrane. The polypeptide is C4-dicarboxylate transport protein 1 (Polaromonas naphthalenivorans (strain CJ2)).